Reading from the N-terminus, the 320-residue chain is Prophage side tail fiber protein homolog StfQ (320 aa).

Disordered stretches follow at residues 147–213 (SGRA…HKSS) and 241–270 (TTSGSGQTRNAGKTSSDGAHTHSLSGTAAS). 2 stretches are compositionally biased toward polar residues: residues 172 to 206 (DLGTETTSSFDYGTKSTNNTGAHTHSISGTANSAG) and 241 to 258 (TTSGSGQTRNAGKTSSDG). Residues 261–270 (THSLSGTAAS) show a composition bias toward low complexity.

The protein belongs to the tail fiber family.

The sequence is that of Prophage side tail fiber protein homolog StfQ (stfQ) from Escherichia coli (strain K12).